The primary structure comprises 311 residues: MADQLIRAMAAEGGIRAVGVITTRLTEEARQRHKLSWVASVVLGRTMAAGLLLASSMKTPESRVNIRVQGNGPLGEVLVDAGLDGTVRGYVNNPTIELLPNKIGKHDIGKAVGNQGYLYIVRDIGYGYPYSGTVELVSGEIGDDITHYLAKSEQTPSALVLGVFVDKEGVQTAGGILLQVMPKVAIDEELVQVLESRIASLSGFTSLLHSGKTLPEIFQELLGDMGLNILPEAQIVRFKCDCSMEKVLRALRMFGVDELQNMIEEDKGAEVTCEFCSQLYQASPKELTQIIQDLQQPSTEVPLGQLRRSSH.

2 cysteine pairs are disulfide-bonded: C240–C242 and C273–C276.

Belongs to the HSP33 family. Post-translationally, under oxidizing conditions two disulfide bonds are formed involving the reactive cysteines. Under reducing conditions zinc is bound to the reactive cysteines and the protein is inactive.

The protein resides in the cytoplasm. Functionally, redox regulated molecular chaperone. Protects both thermally unfolding and oxidatively damaged proteins from irreversible aggregation. Plays an important role in the bacterial defense system toward oxidative stress. The polypeptide is 33 kDa chaperonin (Trichodesmium erythraeum (strain IMS101)).